The sequence spans 271 residues: Structure-specific endonuclease subunit SLX1 (271 aa).

The region spanning 9-94 (RFFGVYLLYC…PQASRRLTHV (86 aa)) is the GIY-YIG domain. An SLX1-type zinc finger spans residues 182–234 (CTLCARMLQDEEGPLCCPHPGCPLRAHIICLAEEFLQEEPGQLLPLEGHCPSC).

Belongs to the SLX1 family. As to quaternary structure, forms a heterodimer with SLX4. The cofactor is a divalent metal cation.

The protein localises to the nucleus. Its function is as follows. Catalytic subunit of the SLX1-SLX4 structure-specific endonuclease that resolves DNA secondary structures generated during DNA repair and recombination. Has endonuclease activity towards branched DNA substrates, introducing single-strand cuts in duplex DNA close to junctions with ss-DNA. Has a preference for 5'-flap structures, and promotes symmetrical cleavage of static and migrating Holliday junctions (HJs). Resolves HJs by generating two pairs of ligatable, nicked duplex products. This is Structure-specific endonuclease subunit SLX1 (Slx1b) from Rattus norvegicus (Rat).